The following is a 283-amino-acid chain: Elongation factor Ts (283 aa).

The involved in Mg(2+) ion dislocation from EF-Tu stretch occupies residues 80–83 (TDFV).

Belongs to the EF-Ts family.

It localises to the cytoplasm. Functionally, associates with the EF-Tu.GDP complex and induces the exchange of GDP to GTP. It remains bound to the aminoacyl-tRNA.EF-Tu.GTP complex up to the GTP hydrolysis stage on the ribosome. The chain is Elongation factor Ts from Enterobacter sp. (strain 638).